Reading from the N-terminus, the 520-residue chain is GMP synthase [glutamine-hydrolyzing] (520 aa).

Positions 9 to 202 constitute a Glutamine amidotransferase type-1 domain; that stretch reads SVLIIDFGSQ…VHNIAGITGD (194 aa). Cysteine 86 functions as the Nucleophile in the catalytic mechanism. Catalysis depends on residues histidine 176 and glutamate 178. One can recognise a GMPS ATP-PPase domain in the interval 203–395; the sequence is WSMSAYRAKA…LGLPDSFIGR (193 aa). 230-236 serves as a coordination point for ATP; the sequence is SGGVDSS.

Homodimer.

The catalysed reaction is XMP + L-glutamine + ATP + H2O = GMP + L-glutamate + AMP + diphosphate + 2 H(+). The protein operates within purine metabolism; GMP biosynthesis; GMP from XMP (L-Gln route): step 1/1. Catalyzes the synthesis of GMP from XMP. The protein is GMP synthase [glutamine-hydrolyzing] of Allorhizobium ampelinum (strain ATCC BAA-846 / DSM 112012 / S4) (Agrobacterium vitis (strain S4)).